Reading from the N-terminus, the 582-residue chain is Zinc finger protein somi-1 (582 aa).

2 disordered regions span residues 179–251 (LRPE…NNTD) and 352–377 (SAEPMKRHRVEAHEKQSPKKKVKKEQ). Polar residues predominate over residues 188–226 (TQKSTNGVHRSTSNSSAETLRNNSVSAATVSPSDDNSLN). Positions 227–244 (SPALTSSGSAGSGTPPLG) are enriched in low complexity. Residues 352–368 (SAEPMKRHRVEAHEKQS) show a composition bias toward basic and acidic residues. The C2H2-type; Degenerate zinc-finger motif lies at 454 to 477 (YICEDCDFVTVYKGNMKRHLNTCH). The segment at 513–582 (AHKANSSRGR…PPPPPPPMLL (70 aa)) is disordered. Residues 551 to 570 (LLESLASSSSSMGGYSNGNN) show a composition bias toward low complexity. The segment covering 572–582 (QPPPPPPPMLL) has biased composition (pro residues).

As to quaternary structure, may interact with swsn-9; the interaction promotes hypodermal differentiation. Expressed in hypodermal seam cells, the somatic gonad and vulval precursor cells, body wall muscle and head neurons.

Its subcellular location is the nucleus. DNA-binding protein which binds to the promoters of let-60, lin-14 and lin-28, possibly to regulate genes involved in hypodermal and vulval development. Together with miRNAs mir-84 and let-7 may direct terminal differentiation of the seam cells, exit from the molting cycle, and vulva formation. Does not regulate the expression of mir-84. May promote hypodermal differentiation in association with swsn-9, a component of SWI/SNF chromatin remodeling complexes. The chain is Zinc finger protein somi-1 from Caenorhabditis elegans.